Consider the following 181-residue polypeptide: Adenylate kinase (181 aa).

ATP is bound at residue 7–15 (GVAGVGKTT).

The protein belongs to the archaeal adenylate kinase family.

The protein localises to the cytoplasm. The enzyme catalyses AMP + ATP = 2 ADP. This Thermoplasma volcanium (strain ATCC 51530 / DSM 4299 / JCM 9571 / NBRC 15438 / GSS1) protein is Adenylate kinase (adkA).